A 311-amino-acid polypeptide reads, in one-letter code: MALPIIIDCDPGHDDAIALVLALASPELEVKAITSSAGNQTPEKTLRNVLRMLTLLKRPDIPVAGGAVKPLMRELIIADNVHGESGLNGPALPEPSFAPQSGTAVELMAKTLRESAQPVTIVSTGPQTNVALLLNSHPELHTKIARIVIMGGAMALGNWTPAAEFNIYVDPEAAEIVFQSGIPVVMAGLDVTHKAQIHAADIERFRAIGNPISTIVAELLDFFMEYHKDEKWGFVGAPLHDPCTIAWLLKPEIFTTVERWVGVETKGKYTQGMTVVDYYFLTGNKPNATVMVDVDRQGFVDLLAERLQYYA.

The active site involves H240.

Belongs to the IUNH family. RihA subfamily.

Its function is as follows. Hydrolyzes cytidine or uridine to ribose and cytosine or uracil, respectively. The sequence is that of Pyrimidine-specific ribonucleoside hydrolase RihA from Salmonella enteritidis PT4 (strain P125109).